Here is a 525-residue protein sequence, read N- to C-terminus: MSNPRMFQSRGKRVVSDSLPIANSTHTLEDTLKLRPDWTIALSQHETETRSTRTSCSTTTESTIAMRSKQKAIISVLEEFRDSEAAYVHDLHVAQRYYADRLSDRVKKSEWKDVFEIFLVLCKQASLFEIEMHKSLNDEINYILDDQDACLKPKPSVAQLFLSWLPKLSAVYGRYCVIQENIGKKVEKWMKNSSISEYLQECDSMAKIESNSWNLDSFLVKPVQRFLKYPLLLNQLYRSASLGIISDYVLLGEACHKSEIASQRMNELKRRRDIIITALDSVSNSQEVLLLSTDSIDKKIAKLQNSTNIFYVPEHEPILAFVHQLSSSYTNLLNLRSAICDWLKFSRYHYLKFFTFVEAYSVFCKDTKSADKWALISVALDNIAKGAVLRLTEQCQTSVLRPISNGILFFRNPLCVTDVWIKKATAFSKRRQSQVFEEDLESFPLLSNCLLEELPLFLEMARNVTDECILAFAQIQATFYDTIQKVLEPVVAKFNLTDHQDIPSIESIMDFTSLRSSMESSPKSK.

The DH domain maps to 72–268; the sequence is AIISVLEEFR…EIASQRMNEL (197 aa).

The protein resides in the cytoplasm. In terms of biological role, has a role in the control of cell polarity and cytokinesis. Involved in bipolar growth and septum formation. The protein is Rho guanine nucleotide exchange factor gef3 (gef3) of Schizosaccharomyces pombe (strain 972 / ATCC 24843) (Fission yeast).